We begin with the raw amino-acid sequence, 729 residues long: Catalase-peroxidase (729 aa).

The disordered stretch occupies residues Met-1–Arg-24. The tryptophyl-tyrosyl-methioninium (Trp-Tyr) (with M-243) cross-link spans Trp-95–Tyr-217. His-96 functions as the Proton acceptor in the catalytic mechanism. Positions Tyr-217 to Met-243 form a cross-link, tryptophyl-tyrosyl-methioninium (Tyr-Met) (with W-95). His-258 provides a ligand contact to heme b.

Belongs to the peroxidase family. Peroxidase/catalase subfamily. Homodimer or homotetramer. It depends on heme b as a cofactor. In terms of processing, formation of the three residue Trp-Tyr-Met cross-link is important for the catalase, but not the peroxidase activity of the enzyme.

It catalyses the reaction H2O2 + AH2 = A + 2 H2O. It carries out the reaction 2 H2O2 = O2 + 2 H2O. Functionally, bifunctional enzyme with both catalase and broad-spectrum peroxidase activity. This Nitrobacter winogradskyi (strain ATCC 25391 / DSM 10237 / CIP 104748 / NCIMB 11846 / Nb-255) protein is Catalase-peroxidase.